Reading from the N-terminus, the 506-residue chain is Probable alpha-L-arabinofuranosidase B (506 aa).

An N-terminal signal peptide occupies residues 1–26; it reads MLPQLSIERASVFALGLIATGSLVVA. A catalytic region spans residues 27-343; that stretch reads GPCDIYSAGG…ANIVAAKYAT (317 aa). Intrachain disulfides connect cysteine 29/cysteine 39, cysteine 89/cysteine 94, and cysteine 184/cysteine 185. Aspartate 227 is a binding site for substrate. Residue glutamate 229 is the Nucleophile of the active site. Asparagine 230 is a substrate binding site. An N-linked (GlcNAc...) asparagine glycan is attached at asparagine 240. Residue glycine 304 coordinates substrate. Catalysis depends on aspartate 305, which acts as the Proton donor. The segment at 344 to 506 is ABD; sequence ASLTSGPKLT…VSWVISTGFA (163 aa). A disulfide bridge connects residues cysteine 409 and cysteine 447. Residues histidine 424, asparagine 426, phenylalanine 427, aspartate 443, histidine 471, leucine 476, and aspartate 496 each contribute to the substrate site.

The protein belongs to the glycosyl hydrolase 54 family.

The protein localises to the secreted. It catalyses the reaction Hydrolysis of terminal non-reducing alpha-L-arabinofuranoside residues in alpha-L-arabinosides.. It participates in glycan metabolism; L-arabinan degradation. Its function is as follows. Alpha-L-arabinofuranosidase involved in the degradation of arabinoxylan, a major component of plant hemicellulose. Able to hydrolyze 1,5-, 1,3- and 1,2-alpha-linkages not only in L-arabinofuranosyl oligosaccharides, but also in polysaccharides containing terminal non-reducing L-arabinofuranoses in side chains, like L-arabinan, arabinogalactan and arabinoxylan. The polypeptide is Probable alpha-L-arabinofuranosidase B (abfB) (Aspergillus fumigatus (strain ATCC MYA-4609 / CBS 101355 / FGSC A1100 / Af293) (Neosartorya fumigata)).